A 191-amino-acid chain; its full sequence is Small ribosomal subunit protein uS5 (191 aa).

The disordered stretch occupies residues 1–20 (MAAERERGGRERSRDREERD). The S5 DRBM domain occupies 23–86 (FVDKLVHINR…EAAKRNLTRV (64 aa)).

The protein belongs to the universal ribosomal protein uS5 family. As to quaternary structure, part of the 30S ribosomal subunit. Contacts proteins S4 and S8.

In terms of biological role, with S4 and S12 plays an important role in translational accuracy. Located at the back of the 30S subunit body where it stabilizes the conformation of the head with respect to the body. The chain is Small ribosomal subunit protein uS5 from Rhodopseudomonas palustris (strain HaA2).